The sequence spans 308 residues: Flavonol synthase 3 (308 aa).

Residues 167 to 267 (TIEYLMKINY…RISWPVFVES (101 aa)) enclose the Fe2OG dioxygenase domain. 175-177 (NYY) is a 2-oxoglutarate binding site. Fe cation-binding residues include H192, D194, and H248. 258–260 (RIS) is a binding site for 2-oxoglutarate.

Belongs to the iron/ascorbate-dependent oxidoreductase family. Fe(2+) is required as a cofactor. In terms of tissue distribution, widely expressed at low levels.

It carries out the reaction a (2R,3R)-dihydroflavonol + 2-oxoglutarate + O2 = a flavonol + succinate + CO2 + H2O. It participates in secondary metabolite biosynthesis; flavonoid biosynthesis. Catalyzes the formation of flavonols from dihydroflavonols. Possesses low activity in vitro towards dihydrokaempferol and dihydroquercetin producing kaempferol and quercitin, respectively. The protein is Flavonol synthase 3 of Arabidopsis thaliana (Mouse-ear cress).